We begin with the raw amino-acid sequence, 167 residues long: SAR-endolysin (167 aa).

The helical; Signal-anchor for type II membrane protein transmembrane segment at 10-32 threads the bilayer; it reads SVMAAISGGAIAIASVLITGPGG. Active-site proton donor/acceptor residues include Glu-37 and Asp-46.

Belongs to the glycosyl hydrolase 24 family.

Its subcellular location is the host cell inner membrane. The catalysed reaction is Hydrolysis of (1-&gt;4)-beta-linkages between N-acetylmuramic acid and N-acetyl-D-glucosamine residues in a peptidoglycan and between N-acetyl-D-glucosamine residues in chitodextrins.. Signal-arrest-release (SAR) endolysin with lysozyme activity that degrades host peptidoglycans and participates with the pinholin and spanin proteins in the sequential events which lead to programmed host cell lysis releasing the mature viral particles. Once the pinholin has permeabilized the host cell membrane, the SAR-endolysin is released into the periplasm where it breaks down the peptidoglycan layer. The polypeptide is SAR-endolysin (19) (Bacteriophage PS119).